The sequence spans 236 residues: Probable metal transport system ATP-binding protein TC_0697 (236 aa).

An ABC transporter domain is found at 5–236 (LILENVSFRY…FCCNTFGKCS (232 aa)). 39–46 (GPNGGGKT) provides a ligand contact to ATP.

The protein belongs to the ABC transporter superfamily.

It localises to the cell inner membrane. In terms of biological role, part of an ATP-driven transport system TC_0696/TC_0697/TC_0698 for a metal. Probably responsible for energy coupling to the transport system. This Chlamydia muridarum (strain MoPn / Nigg) protein is Probable metal transport system ATP-binding protein TC_0697.